Reading from the N-terminus, the 333-residue chain is Acetoin:2,6-dichlorophenolindophenol oxidoreductase subunit alpha (333 aa).

In terms of assembly, tetramer of 2 alpha and 2 beta subunits. Requires thiamine diphosphate as cofactor.

Its pathway is ketone degradation; acetoin degradation. Its function is as follows. Catalyzes the 2,6-dichlorophenolindophenol-dependent cleavage of acetoin into acetate and acetaldehyde, in vitro. The alpha subunit is probably the catalytic subunit of the enzyme. This Cupriavidus necator (strain ATCC 17699 / DSM 428 / KCTC 22496 / NCIMB 10442 / H16 / Stanier 337) (Ralstonia eutropha) protein is Acetoin:2,6-dichlorophenolindophenol oxidoreductase subunit alpha (acoA).